The following is a 452-amino-acid chain: Bifunctional protein GlmU (452 aa).

A pyrophosphorylase region spans residues 1-226 (MNFSAVILAA…PIEVEGVNDR (226 aa)). UDP-N-acetyl-alpha-D-glucosamine-binding positions include 8 to 11 (LAAG), lysine 22, glutamine 73, 78 to 79 (GT), 100 to 102 (YGD), glycine 137, glutamate 151, asparagine 166, and asparagine 224. Position 102 (aspartate 102) interacts with Mg(2+). Asparagine 224 contacts Mg(2+). The linker stretch occupies residues 227–247 (AQLARLERAYQAAQAQKLLEQ). Positions 248–452 (GVMLRDPSRF…IANWQRPTKK (205 aa)) are N-acetyltransferase. Residues arginine 330 and lysine 348 each coordinate UDP-N-acetyl-alpha-D-glucosamine. Catalysis depends on histidine 360, which acts as the Proton acceptor. UDP-N-acetyl-alpha-D-glucosamine is bound by residues tyrosine 363 and asparagine 374. Residues alanine 377, 383 to 384 (NY), serine 402, alanine 420, and arginine 437 contribute to the acetyl-CoA site.

In the N-terminal section; belongs to the N-acetylglucosamine-1-phosphate uridyltransferase family. It in the C-terminal section; belongs to the transferase hexapeptide repeat family. As to quaternary structure, homotrimer. Requires Mg(2+) as cofactor.

It localises to the cytoplasm. The enzyme catalyses alpha-D-glucosamine 1-phosphate + acetyl-CoA = N-acetyl-alpha-D-glucosamine 1-phosphate + CoA + H(+). It carries out the reaction N-acetyl-alpha-D-glucosamine 1-phosphate + UTP + H(+) = UDP-N-acetyl-alpha-D-glucosamine + diphosphate. The protein operates within nucleotide-sugar biosynthesis; UDP-N-acetyl-alpha-D-glucosamine biosynthesis; N-acetyl-alpha-D-glucosamine 1-phosphate from alpha-D-glucosamine 6-phosphate (route II): step 2/2. It functions in the pathway nucleotide-sugar biosynthesis; UDP-N-acetyl-alpha-D-glucosamine biosynthesis; UDP-N-acetyl-alpha-D-glucosamine from N-acetyl-alpha-D-glucosamine 1-phosphate: step 1/1. Its pathway is bacterial outer membrane biogenesis; LPS lipid A biosynthesis. Its function is as follows. Catalyzes the last two sequential reactions in the de novo biosynthetic pathway for UDP-N-acetylglucosamine (UDP-GlcNAc). The C-terminal domain catalyzes the transfer of acetyl group from acetyl coenzyme A to glucosamine-1-phosphate (GlcN-1-P) to produce N-acetylglucosamine-1-phosphate (GlcNAc-1-P), which is converted into UDP-GlcNAc by the transfer of uridine 5-monophosphate (from uridine 5-triphosphate), a reaction catalyzed by the N-terminal domain. The polypeptide is Bifunctional protein GlmU (Aliivibrio fischeri (strain ATCC 700601 / ES114) (Vibrio fischeri)).